Consider the following 157-residue polypeptide: 6,7-dimethyl-8-ribityllumazine synthase (157 aa).

Residues phenylalanine 24, 56–58 (SFE), and 79–81 (VLI) contribute to the 5-amino-6-(D-ribitylamino)uracil site. (2S)-2-hydroxy-3-oxobutyl phosphate is bound at residue 84–85 (ET). The active-site Proton donor is histidine 87. 5-amino-6-(D-ribitylamino)uracil is bound at residue phenylalanine 112. Residue arginine 126 participates in (2S)-2-hydroxy-3-oxobutyl phosphate binding.

This sequence belongs to the DMRL synthase family.

The enzyme catalyses (2S)-2-hydroxy-3-oxobutyl phosphate + 5-amino-6-(D-ribitylamino)uracil = 6,7-dimethyl-8-(1-D-ribityl)lumazine + phosphate + 2 H2O + H(+). Its pathway is cofactor biosynthesis; riboflavin biosynthesis; riboflavin from 2-hydroxy-3-oxobutyl phosphate and 5-amino-6-(D-ribitylamino)uracil: step 1/2. Its function is as follows. Catalyzes the formation of 6,7-dimethyl-8-ribityllumazine by condensation of 5-amino-6-(D-ribitylamino)uracil with 3,4-dihydroxy-2-butanone 4-phosphate. This is the penultimate step in the biosynthesis of riboflavin. The sequence is that of 6,7-dimethyl-8-ribityllumazine synthase from Pyrococcus furiosus (strain ATCC 43587 / DSM 3638 / JCM 8422 / Vc1).